A 418-amino-acid chain; its full sequence is Outer membrane protein assembly factor BamB (418 aa).

Positions 1–28 are cleaved as a signal peptide; that stretch reads MFHNTCGRKGRFARAMGMALAISVTLSG. Cysteine 29 is lipidated: N-palmitoyl cysteine. Cysteine 29 carries S-diacylglycerol cysteine lipidation.

Belongs to the BamB family. As to quaternary structure, part of the Bam complex.

It is found in the cell outer membrane. Functionally, part of the outer membrane protein assembly complex, which is involved in assembly and insertion of beta-barrel proteins into the outer membrane. The polypeptide is Outer membrane protein assembly factor BamB (Alteromonas naphthalenivorans).